A 146-amino-acid polypeptide reads, in one-letter code: Cystatin-C (146 aa).

The N-terminal stretch at 1 to 26 (MAGPLRAPLLLLAILAVALAVSPAAG) is a signal peptide. S43 carries the phosphoserine; by FAM20C modification. The Secondary area of contact motif lies at 81–85 (QIVAG). Disulfide bonds link C99/C109 and C123/C143.

The protein belongs to the cystatin family. Homodimer. Post-translationally, the Thr-25 variant is O-glycosylated with a core 1 or possibly core 8 glycan. The signal peptide of the O-glycosylated Thr-25 variant is cleaved between Ala-20 and Val-21. Expressed in submandibular and sublingual saliva but not in parotid saliva (at protein level). Expressed in various body fluids, such as the cerebrospinal fluid and plasma. Expressed in highest levels in the epididymis, vas deferens, brain, thymus, and ovary and the lowest in the submandibular gland.

Its subcellular location is the secreted. Its function is as follows. As an inhibitor of cysteine proteinases, this protein is thought to serve an important physiological role as a local regulator of this enzyme activity. This Homo sapiens (Human) protein is Cystatin-C (CST3).